Reading from the N-terminus, the 1455-residue chain is Cleavage and polyadenylation specificity factor subunit 1 (1455 aa).

The protein belongs to the CPSF1 family. In terms of assembly, component of the cleavage and polyadenylation specificity factor (CPSF) complex, composed of at least Clp, Cpsf73, Cpsf100 and Cpsf160.

Its subcellular location is the nucleus. Functionally, component of the cleavage and polyadenylation specificity factor (CPSF) complex that plays a key role in pre-mRNA 3'-end formation, recognizing the AAUAAA signal sequence and interacting with poly(A) polymerase and other factors to bring about cleavage and poly(A) addition. This subunit is involved in the RNA recognition step of the polyadenylation reaction. The protein is Cleavage and polyadenylation specificity factor subunit 1 (Cpsf160) of Drosophila melanogaster (Fruit fly).